Consider the following 339-residue polypeptide: Dihydroorotate dehydrogenase (quinone) (339 aa).

FMN-binding positions include 61-65 and T85; that span reads AGLDK. Substrate is bound at residue K65. Residue 110 to 114 coordinates substrate; the sequence is NRMGF. The FMN site is built by N138 and N171. N171 contacts substrate. S174 (nucleophile) is an active-site residue. N176 lines the substrate pocket. FMN-binding residues include K216 and T244. Residue 245-246 participates in substrate binding; it reads NT. Residues G267, G296, and 317–318 contribute to the FMN site; that span reads YS.

It belongs to the dihydroorotate dehydrogenase family. Type 2 subfamily. Monomer. Requires FMN as cofactor.

Its subcellular location is the cell membrane. The enzyme catalyses (S)-dihydroorotate + a quinone = orotate + a quinol. Its pathway is pyrimidine metabolism; UMP biosynthesis via de novo pathway; orotate from (S)-dihydroorotate (quinone route): step 1/1. Its function is as follows. Catalyzes the conversion of dihydroorotate to orotate with quinone as electron acceptor. The chain is Dihydroorotate dehydrogenase (quinone) from Saccharophagus degradans (strain 2-40 / ATCC 43961 / DSM 17024).